Here is a 378-residue protein sequence, read N- to C-terminus: Erythronate-4-phosphate dehydrogenase (378 aa).

Residues S45 and T66 each contribute to the substrate site. The NAD(+) site is built by D146 and T175. R208 is a catalytic residue. D232 contributes to the NAD(+) binding site. Residue E237 is part of the active site. The active-site Proton donor is the H254. G257 contacts NAD(+). Position 258 (Y258) interacts with substrate.

The protein belongs to the D-isomer specific 2-hydroxyacid dehydrogenase family. PdxB subfamily. In terms of assembly, homodimer.

It localises to the cytoplasm. The catalysed reaction is 4-phospho-D-erythronate + NAD(+) = (R)-3-hydroxy-2-oxo-4-phosphooxybutanoate + NADH + H(+). The protein operates within cofactor biosynthesis; pyridoxine 5'-phosphate biosynthesis; pyridoxine 5'-phosphate from D-erythrose 4-phosphate: step 2/5. Its function is as follows. Catalyzes the oxidation of erythronate-4-phosphate to 3-hydroxy-2-oxo-4-phosphonooxybutanoate. The chain is Erythronate-4-phosphate dehydrogenase from Klebsiella pneumoniae (strain 342).